A 318-amino-acid polypeptide reads, in one-letter code: Acetyl-coenzyme A carboxylase carboxyl transferase subunit alpha (318 aa).

Residues 38–292 (KLEKRLAKLE…NKTITKSLHA (255 aa)) enclose the CoA carboxyltransferase C-terminal domain.

The protein belongs to the AccA family. Acetyl-CoA carboxylase is a heterohexamer composed of biotin carboxyl carrier protein (AccB), biotin carboxylase (AccC) and two subunits each of ACCase subunit alpha (AccA) and ACCase subunit beta (AccD).

The protein localises to the cytoplasm. The enzyme catalyses N(6)-carboxybiotinyl-L-lysyl-[protein] + acetyl-CoA = N(6)-biotinyl-L-lysyl-[protein] + malonyl-CoA. It participates in lipid metabolism; malonyl-CoA biosynthesis; malonyl-CoA from acetyl-CoA: step 1/1. Functionally, component of the acetyl coenzyme A carboxylase (ACC) complex. First, biotin carboxylase catalyzes the carboxylation of biotin on its carrier protein (BCCP) and then the CO(2) group is transferred by the carboxyltransferase to acetyl-CoA to form malonyl-CoA. This is Acetyl-coenzyme A carboxylase carboxyl transferase subunit alpha from Listeria monocytogenes serovar 1/2a (strain ATCC BAA-679 / EGD-e).